A 51-amino-acid polypeptide reads, in one-letter code: Defensin (51 aa).

Cystine bridges form between Cys3–Cys31, Cys17–Cys36, and Cys21–Cys38. Phe51 carries the post-translational modification Phenylalanine amide.

Its subcellular location is the secreted. Functionally, antibacterial peptide against Gram-positive and Gram-negative bacteria and fungi. The protein is Defensin of Bombus pascuorum (Common carder bumblebee).